Here is a 356-residue protein sequence, read N- to C-terminus: Vanillin synthase, chloroplastic (356 aa).

Residue asparagine 122 is glycosylated (N-linked (GlcNAc...) asparagine). Intrachain disulfides connect cysteine 159–cysteine 202 and cysteine 193–cysteine 235. The active site involves cysteine 162. Residue asparagine 251 is glycosylated (N-linked (GlcNAc...) asparagine). An intrachain disulfide couples cysteine 293 to cysteine 343. Residues histidine 302 and asparagine 322 contribute to the active site.

The protein belongs to the peptidase C1 family. In terms of assembly, forms homodimers, homotrimers and homotetramers. Accumulates in the inner part of vanilla pods (at protein level). Expressed in single cells located a few cell layers from the inner epidermis.

It localises to the plastid. The protein localises to the chloroplast. The enzyme catalyses (E)-ferulate + H2O = vanillin + acetate. The catalysed reaction is 4-O-beta-D-glucosyl-trans-ferulate + H2O = 4-O-beta-D-glucosyl-vanillin + acetate. It participates in aromatic compound metabolism; phenylpropanoid biosynthesis. Functionally, involved in the biosynthesis of vanillin (4-hydroxy-3-methoxy-benzaldehyde) and derivative natural products, key components of vanilla pods flavor. Catalyzes the double carbon bond cleavage of ferulic acid to vanillin and of their respective glucosides via a coupled non-oxidative hydratase/lyase reaction. Inactive toward p-coumaric acid, caffeic acid and their glucosides derivatives. This chain is Vanillin synthase, chloroplastic, found in Vanilla planifolia (Vanilla).